Reading from the N-terminus, the 871-residue chain is Tegument protein UL47 homolog (871 aa).

A disordered region spans residues 1–212; that stretch reads MDQHHGARGG…DEDDMEVIRD (212 aa). The Nuclear localization signal motif lies at 13–33; it reads IRRPRRSIESRSHPFRATGNT. 2 stretches are compositionally biased toward polar residues: residues 30-41 and 59-81; these read TGNTQRTYSTPR and EQAS…STSF. Acidic residues-rich tracts occupy residues 114-134, 146-155, and 185-207; these read SSSE…EEDQ, SSDENDEEED, and SESE…EDDM.

It belongs to the alphaherpesvirinae HHV-1 UL47 family. In terms of assembly, interacts with US3 kinase. Interacts with UL31 and UL34; these interactions seem important for efficient virion nuclear egress. Interacts with UL41/VHS. Post-translationally, phosphorylated by US3. This phosphorylation is required for proper nuclear localization.

It is found in the virion tegument. Its subcellular location is the host nucleus. The protein resides in the host cytoplasm. Its function is as follows. Tegument protein that can bind to various RNA transcripts. Plays a role in the attenuation of selective viral and cellular mRNA degradation by modulating the activity of host shutoff RNase UL41/VHS. Also plays a role in the primary envelopment of virions in the perinuclear space, probably by interacting with two nuclear egress proteins UL31 and UL34. The protein is Tegument protein UL47 homolog of Equine herpesvirus 1 (strain V592) (EHV-1).